The following is a 166-amino-acid chain: UPF0254 protein Maeo_0668 (166 aa).

Belongs to the UPF0254 family.

The chain is UPF0254 protein Maeo_0668 from Methanococcus aeolicus (strain ATCC BAA-1280 / DSM 17508 / OCM 812 / Nankai-3).